We begin with the raw amino-acid sequence, 474 residues long: ATP synthase subunit beta (474 aa).

ATP is bound at residue 158 to 165 (GGAGVGKT).

Belongs to the ATPase alpha/beta chains family. F-type ATPases have 2 components, CF(1) - the catalytic core - and CF(0) - the membrane proton channel. CF(1) has five subunits: alpha(3), beta(3), gamma(1), delta(1), epsilon(1). CF(0) has three main subunits: a(1), b(2) and c(9-12). The alpha and beta chains form an alternating ring which encloses part of the gamma chain. CF(1) is attached to CF(0) by a central stalk formed by the gamma and epsilon chains, while a peripheral stalk is formed by the delta and b chains.

It is found in the cell membrane. It carries out the reaction ATP + H2O + 4 H(+)(in) = ADP + phosphate + 5 H(+)(out). In terms of biological role, produces ATP from ADP in the presence of a proton gradient across the membrane. The catalytic sites are hosted primarily by the beta subunits. The sequence is that of ATP synthase subunit beta from Tropheryma whipplei (strain Twist) (Whipple's bacillus).